A 471-amino-acid chain; its full sequence is Ribosomal protein uS12 methylthiotransferase RimO (471 aa).

Positions 2–122 (IKVSLISLGC…VAPIIQEIYA (121 aa)) constitute an MTTase N-terminal domain. 6 residues coordinate [4Fe-4S] cluster: Cys-11, Cys-47, Cys-84, Cys-166, Cys-170, and Cys-173. The region spanning 152 to 395 (LTPKHFAYVK…MALQKQIAAD (244 aa)) is the Radical SAM core domain. The TRAM domain occupies 398-458 (KTYVGRTLRV…DYDLLALPPG (61 aa)).

Belongs to the methylthiotransferase family. RimO subfamily. Requires [4Fe-4S] cluster as cofactor.

It is found in the cytoplasm. The enzyme catalyses L-aspartate(89)-[ribosomal protein uS12]-hydrogen + (sulfur carrier)-SH + AH2 + 2 S-adenosyl-L-methionine = 3-methylsulfanyl-L-aspartate(89)-[ribosomal protein uS12]-hydrogen + (sulfur carrier)-H + 5'-deoxyadenosine + L-methionine + A + S-adenosyl-L-homocysteine + 2 H(+). Catalyzes the methylthiolation of an aspartic acid residue of ribosomal protein uS12. The chain is Ribosomal protein uS12 methylthiotransferase RimO from Opitutus terrae (strain DSM 11246 / JCM 15787 / PB90-1).